Reading from the N-terminus, the 334-residue chain is uncharacterized protein (334 aa).

Catalysis depends on Tyr-52, which acts as the Proton donor. The tract at residues 314-334 (LPPPASPNSEPQVTGGCSSMC) is disordered. Residues 320 to 334 (PNSEPQVTGGCSSMC) are compositionally biased toward polar residues.

It belongs to the aldo/keto reductase family.

The protein localises to the cytoplasm. It localises to the nucleus. This is an uncharacterized protein from Schizosaccharomyces pombe (strain 972 / ATCC 24843) (Fission yeast).